Consider the following 144-residue polypeptide: MSSLSILHLLLLLLALHAPQAKGLPVVTSRTPYSMLMKEIMDDLKKITPSPEGSLNSDEKNFLTKESLLQANLKVFMTFATDTFGSDSKIMKNLKEFQPVLPTATPTEDPIFIENKNLGDFRMKLEEYLVIIRNYLKSKNIWFS.

Residues 1–17 (MSSLSILHLLLLLLALH) form the signal peptide.

It belongs to the IL-3 family. As to quaternary structure, monomer.

It is found in the secreted. Functionally, granulocyte/macrophage colony-stimulating factors are cytokines that act in hematopoiesis by controlling the production, differentiation, and function of 2 related white cell populations of the blood, the granulocytes and the monocytes-macrophages. In terms of biological role, this CSF induces granulocytes, macrophages, mast cells, stem cells, erythroid cells, eosinophils and megakaryocytes. In Bos taurus (Bovine), this protein is Interleukin-3 (IL3).